We begin with the raw amino-acid sequence, 203 residues long: Ras-like protein family member 10A (203 aa).

A small GTPase-like region spans residues 1–203; sequence MGGSLRVAVL…ALHPARCSLM (203 aa). Residue 11–18 participates in GTP binding; sequence GAPGVGKT. Positions 33–42 match the Effector region motif; the sequence is HRPTDSPCLY. GTP contacts are provided by residues 59-62 and 129-132; these read DGDV and NKRD. Cysteine methyl ester is present on Cys200. Residue Cys200 is the site of S-farnesyl cysteine attachment. The propeptide at 201-203 is removed in mature form; that stretch reads SLM.

This sequence belongs to the small GTPase superfamily. Ras family. In terms of processing, isoprenylation is essential for nucleolar localization, and the proliferation-inhibiting activity of RASL10A.

It localises to the cell membrane. Its subcellular location is the nucleus. The protein localises to the nucleolus. It carries out the reaction GTP + H2O = GDP + phosphate + H(+). Its function is as follows. Potent inhibitor of cellular proliferation. The chain is Ras-like protein family member 10A (Rasl10a) from Mus musculus (Mouse).